The sequence spans 719 residues: Transcription factor E4F1 (719 aa).

Residues 20–63 (NIITIQTTLGDEDEDIHKCGKCLAEFSALDAFIQHKLSRSCKRT) are required for ubiquitin ligase activity. Residues 59-125 (SCKRTQDPQT…SEDESSSPSK (67 aa)) form a disordered region. Basic and acidic residues predominate over residues 98 to 109 (EKQDAKVASGDK). Positions 128–207 (WKLNTEGRYV…GLAFRESGAL (80 aa)) are mediates dimerization and DNA-binding. 2 consecutive C2H2-type zinc fingers follow at residues 136 to 158 (YVCD…MFTH) and 164 to 186 (FVCE…KRRH). A C2H2-type 3; degenerate zinc finger spans residues 192–216 (YRCNQCGLAFRESGALTRHLKSLTP). C2H2-type zinc fingers lie at residues 365–387 (YKCP…VKGH), 393–415 (FKCL…METH), 421–443 (YKCG…MRAH), 449–471 (YHCS…HRTH), and 477–499 (YVCQ…IRHH). Residues 505-527 (FKCSKCGRGFAEHGTLNRHLRAK) form a C2H2-type 9; degenerate zinc finger.

Its subcellular location is the nucleus. The protein resides in the nucleoplasm. The protein localises to the cytoplasm. The catalysed reaction is S-ubiquitinyl-[E2 ubiquitin-conjugating enzyme]-L-cysteine + [acceptor protein]-L-lysine = [E2 ubiquitin-conjugating enzyme]-L-cysteine + N(6)-ubiquitinyl-[acceptor protein]-L-lysine.. The protein operates within protein modification; protein ubiquitination. Its function is as follows. May function as a transcriptional repressor. May also function as a ubiquitin ligase. Functions in cell survival and proliferation through control of the cell cycle. The chain is Transcription factor E4F1 (e4f1) from Danio rerio (Zebrafish).